The sequence spans 379 residues: D-threonine aldolase (379 aa).

Lysine 59 is subject to N6-(pyridoxal phosphate)lysine.

Belongs to the DSD1 family. Requires pyridoxal 5'-phosphate as cofactor. Mn(2+) serves as cofactor. Co(2+) is required as a cofactor. It depends on Ni(2+) as a cofactor. The cofactor is Mg(2+).

It carries out the reaction D-threonine = acetaldehyde + glycine. The enzyme catalyses D-allo-threonine = acetaldehyde + glycine. With respect to regulation, inhibited by the carbonyl reagents hydroxylamine, phenylhydrazine and semicarbazide. Inhibited by the chelating agent EDTA. Inhibited by the sulfhydryl reagent p-chloromercuribenzoic acid, and by sodium cyanide. Inhibited by iodoacetate, Ag(2)SO(4), HgCl(2) and CdCl(2). Competitively inhibited by beta-hydroxyaspartate and O-phospho-DL-threonine. Its function is as follows. Catalyzes the reversible cleavage of D-threonine or D-allothreonine into glycine and acetaldehyde. Can also cleave D-beta-phenylserine, D-beta-hydroxy-alpha-aminovaleric acid, D-beta-3,4-dihydroxyphenylserine and D-beta-3,4-methylenedioxyphenylserine into glycine and the corresponding aldehyde compounds. Inactive towards D-serine, beta-hydroxyaspartate and O-phospho-DL-threonine. This is D-threonine aldolase from Arthrobacter sp.